Here is a 586-residue protein sequence, read N- to C-terminus: Pectinesterase 1 (586 aa).

Positions 1–49 (MDSVNSFKGYGKVDEAQDLALKKKTRKRLLLLSISVVVLIAVIIAAVVA) are cleaved as a signal peptide. N-linked (GlcNAc...) asparagine glycosylation is found at N57, N97, N154, N201, and N207. The RRLM cleavage motif signature appears at 250–253 (RRLM). The RRLL cleavage motif signature appears at 269-272 (RRLL). 2 residues coordinate substrate: T355 and Q385. Catalysis depends on D408, which acts as the Proton donor. A disulfide bridge connects residues C422 and C442. The active-site Nucleophile is D429. The N-linked (GlcNAc...) asparagine glycan is linked to N466. Substrate contacts are provided by R492 and W494.

This sequence in the N-terminal section; belongs to the PMEI family. In the C-terminal section; belongs to the pectinesterase family. Interacts with SBT6.1. In terms of tissue distribution, expressed in siliques.

The protein resides in the secreted. The protein localises to the cell wall. It localises to the golgi apparatus membrane. The enzyme catalyses [(1-&gt;4)-alpha-D-galacturonosyl methyl ester](n) + n H2O = [(1-&gt;4)-alpha-D-galacturonosyl](n) + n methanol + n H(+). It participates in glycan metabolism; pectin degradation; 2-dehydro-3-deoxy-D-gluconate from pectin: step 1/5. Acts in the modification of cell walls via demethylesterification of cell wall pectin. Demethylates protein phosphatase 2A (PP2A) that have been reversibly carboxymethylated by LCMT1. Acts as a negative regulators of genes involved in salt stress response. The protein is Pectinesterase 1 (PME1) of Arabidopsis thaliana (Mouse-ear cress).